The chain runs to 291 residues: 4-hydroxy-tetrahydrodipicolinate synthase (291 aa).

Thr45 contributes to the pyruvate binding site. The active-site Proton donor/acceptor is Tyr131. Lys159 serves as the catalytic Schiff-base intermediate with substrate. Position 202 (Ile202) interacts with pyruvate.

The protein belongs to the DapA family. Homotetramer; dimer of dimers.

The protein localises to the cytoplasm. The catalysed reaction is L-aspartate 4-semialdehyde + pyruvate = (2S,4S)-4-hydroxy-2,3,4,5-tetrahydrodipicolinate + H2O + H(+). It participates in amino-acid biosynthesis; L-lysine biosynthesis via DAP pathway; (S)-tetrahydrodipicolinate from L-aspartate: step 3/4. Functionally, catalyzes the condensation of (S)-aspartate-beta-semialdehyde [(S)-ASA] and pyruvate to 4-hydroxy-tetrahydrodipicolinate (HTPA). This Methanosarcina mazei (strain ATCC BAA-159 / DSM 3647 / Goe1 / Go1 / JCM 11833 / OCM 88) (Methanosarcina frisia) protein is 4-hydroxy-tetrahydrodipicolinate synthase.